A 361-amino-acid polypeptide reads, in one-letter code: Carbon monoxide-induced hydrogenase (361 aa).

Ni(2+) is bound by residues Cys64, Cys67, Cys355, and Cys358.

To E.coli formate hydrogenlyase hydrogenase isozyme 3 and to bovine mitochondrial NADH-ubiquinone oxidoreductase. It depends on Ni(2+) as a cofactor.

In terms of biological role, the carbon monoxide dehydrogenase (CODH) oxidizes carbon monoxide coupled, via CooF, to the reduction of a hydrogen cation by a hydrogenase (probably CooH). This Rhodospirillum rubrum protein is Carbon monoxide-induced hydrogenase (cooH).